A 1280-amino-acid polypeptide reads, in one-letter code: Fibronectin type III domain-containing protein (1280 aa).

An N-terminal signal peptide occupies residues 1-19 (MWQILLAISIFSLSKLSNA). Over 20-1156 (QQQPKVAPPQ…RVSTPIYQSA (1137 aa)) the chain is Extracellular. 5 cysteine pairs are disulfide-bonded: Cys-58-Cys-111, Cys-268-Cys-321, Cys-369-Cys-417, Cys-460-Cys-511, and Cys-553-Cys-604. 5 Fibronectin type-III domains span residues 628 to 722 (PFPP…TGSF), 730 to 824 (PEKW…VKQF), 830 to 933 (PTGK…VAAD), 939 to 1033 (PGPP…TEKT), and 1039 to 1131 (PAKP…PASD). Over residues 1118–1130 (YPSQENPQESPAS) the composition is skewed to polar residues. Residues 1118-1144 (YPSQENPQESPASDITEARPRPGISNV) form a disordered region. The helical transmembrane segment at 1157–1177 (WFIALLVLIALLLLVLLTFVL) threads the bilayer. Residues 1178 to 1280 (YTRHQGAKYL…KDPSSLATFV (103 aa)) lie on the Cytoplasmic side of the membrane. A disordered region spans residues 1206-1280 (DEEEGSFSNN…KDPSSLATFV (75 aa)). Residues 1262 to 1273 (DEKKAPPEEKDP) are compositionally biased toward basic and acidic residues.

In terms of tissue distribution, component of the acid-insoluble organic matrix of the aragonitic skeleton (at protein level).

The protein localises to the membrane. The protein is Fibronectin type III domain-containing protein of Acropora millepora (Staghorn coral).